A 139-amino-acid polypeptide reads, in one-letter code: Small ribosomal subunit protein uS12 (139 aa).

The segment at 1 to 21 (MSTVSQLIKKRRSSKTSKTKA) is disordered. Basic residues predominate over residues 8-18 (IKKRRSSKTSK). Position 102 is a 3-methylthioaspartic acid (Asp-102).

It belongs to the universal ribosomal protein uS12 family. Part of the 30S ribosomal subunit. Contacts proteins S8 and S17. May interact with IF1 in the 30S initiation complex.

Its function is as follows. With S4 and S5 plays an important role in translational accuracy. Functionally, interacts with and stabilizes bases of the 16S rRNA that are involved in tRNA selection in the A site and with the mRNA backbone. Located at the interface of the 30S and 50S subunits, it traverses the body of the 30S subunit contacting proteins on the other side and probably holding the rRNA structure together. The combined cluster of proteins S8, S12 and S17 appears to hold together the shoulder and platform of the 30S subunit. In Aster yellows witches'-broom phytoplasma (strain AYWB), this protein is Small ribosomal subunit protein uS12.